A 157-amino-acid chain; its full sequence is Peptide methionine sulfoxide reductase MsrB (157 aa).

The MsrB domain occupies Asp14–Leu137. The Nucleophile role is filled by Cys126.

It belongs to the MsrB Met sulfoxide reductase family.

The catalysed reaction is L-methionyl-[protein] + [thioredoxin]-disulfide + H2O = L-methionyl-(R)-S-oxide-[protein] + [thioredoxin]-dithiol. This chain is Peptide methionine sulfoxide reductase MsrB, found in Deinococcus radiodurans (strain ATCC 13939 / DSM 20539 / JCM 16871 / CCUG 27074 / LMG 4051 / NBRC 15346 / NCIMB 9279 / VKM B-1422 / R1).